A 107-amino-acid polypeptide reads, in one-letter code: Phosphoribosyl-ATP pyrophosphatase (107 aa).

Belongs to the PRA-PH family.

Its subcellular location is the cytoplasm. The enzyme catalyses 1-(5-phospho-beta-D-ribosyl)-ATP + H2O = 1-(5-phospho-beta-D-ribosyl)-5'-AMP + diphosphate + H(+). It functions in the pathway amino-acid biosynthesis; L-histidine biosynthesis; L-histidine from 5-phospho-alpha-D-ribose 1-diphosphate: step 2/9. This is Phosphoribosyl-ATP pyrophosphatase from Zymomonas mobilis subsp. mobilis (strain ATCC 31821 / ZM4 / CP4).